A 407-amino-acid chain; its full sequence is MLHRPRITPAVANARRAMLNTLPADLHNQLVLIALSGGRDSLAAMVIASWVIPRLNGRVGAVVVDHGLQENSARIADEVRIRAEQFALNPILIKRVSPSRVSAGPEASARIARYAAFYDTLEETKAYAIILAHTLDDQAETVLLGLMRGSGPSSLRGMKAVSYTPEDCRYMNNKACNSVTAVYAHNTQRCSCDSRPYPPPPEPRNENRSYFPHPSCKCVEGSATRFTNADIDSRFGVFIRPFLDITRHETGKICEFYGLDYWNDPHNEDVRFSRVRIRHNVMPVLENEIGPGVKYALSRTAKLAQLDTEYLDHLSNELLDEIASKESDWSIRLPINTLQKTPVPIRLRVIRLAALQYFTVSLSFKHTRQIERLLCSSCDIKHVNLPRLITAQRVGNYIYMHTLRGKL.

36–41 (SGGRDS) contacts ATP.

This sequence belongs to the tRNA(Ile)-lysidine synthase family.

The protein localises to the cytoplasm. The enzyme catalyses cytidine(34) in tRNA(Ile2) + L-lysine + ATP = lysidine(34) in tRNA(Ile2) + AMP + diphosphate + H(+). Ligates lysine onto the cytidine present at position 34 of the AUA codon-specific tRNA(Ile) that contains the anticodon CAU, in an ATP-dependent manner. Cytidine is converted to lysidine, thus changing the amino acid specificity of the tRNA from methionine to isoleucine. This is tRNA(Ile)-lysidine synthase from Tropheryma whipplei (strain TW08/27) (Whipple's bacillus).